The primary structure comprises 136 residues: MMWWAVWCAAMVAGSVFTAAAPPTDSIDLMQMDPSLADDESLGFAMQSLSGRYAAAPWLYLLADVSHDPQNGSDRVKRRMPSLSIDMPMSVLRQKLSLENERKLQSLRAMANRNFLNDIGKRGFHWAPSAKAAKFY.

A signal peptide spans 1-26 (MMWWAVWCAAMVAGSVFTAAAPPTDS). Positions 27–76 (IDLMQMDPSLADDESLGFAMQSLSGRYAAAPWLYLLADVSHDPQNGSDRV) are excised as a propeptide. Ile-119 is modified (isoleucine amide). Residues 123–136 (GFHWAPSAKAAKFY) constitute a propeptide that is removed on maturation.

It belongs to the sauvagine/corticotropin-releasing factor/urotensin I family.

The protein localises to the secreted. Regulation of fluid secretion. The polypeptide is Diuretic hormone 41 (dh41) (Bombyx mori (Silk moth)).